The chain runs to 144 residues: Large ribosomal subunit protein uL15 (144 aa).

The disordered stretch occupies residues 1 to 53 (MRLNTLSPAEGAKHSAKRLGRGIGSGLGKTGGRGHKGQKSRTGGGVRRGFEGG). Gly residues predominate over residues 21–31 (RGIGSGLGKTG).

The protein belongs to the universal ribosomal protein uL15 family. As to quaternary structure, part of the 50S ribosomal subunit.

Its function is as follows. Binds to the 23S rRNA. This Haemophilus influenzae (strain ATCC 51907 / DSM 11121 / KW20 / Rd) protein is Large ribosomal subunit protein uL15.